A 233-amino-acid chain; its full sequence is GSK-3-binding protein FRAT2 (233 aa).

Residues 1-24 (MPCRREEEEEAGEEAEGEEEEDDS) are disordered. Over residues 7-24 (EEEEAGEEAEGEEEEDDS) the composition is skewed to acidic residues. The interval 174–196 (DPHRLLQQLVLSGNLIKEAVRRL) is involved in GSK-3 binding. The disordered stretch occupies residues 204–233 (AATGPASAPGPGGGRSGPDRIALQPSGSLL).

It belongs to the GSK-3-binding protein family. As to quaternary structure, binds GSK-3 and prevents GSK-3-dependent phosphorylation.

Functionally, positively regulates the Wnt signaling pathway by stabilizing beta-catenin through the association with GSK-3. This Homo sapiens (Human) protein is GSK-3-binding protein FRAT2 (FRAT2).